The sequence spans 156 residues: Calglandulin (156 aa).

4 EF-hand domains span residues 8–43 (EQIT…IGIN), 44–79 (PTKR…YHEK), 82–117 (NQDE…AGEP), and 118–153 (LNEH…ESFK). Residues Asp-131, Asp-133, Asp-135, Thr-137, and Glu-142 each coordinate Ca(2+).

It belongs to the calmodulin family. Calglandulin subfamily. In terms of tissue distribution, expressed by the venom gland.

It localises to the cytoplasm. Its function is as follows. May be involved in the cellular control mechanism of the secretion of toxins from the gland into the venom. This chain is Calglandulin, found in Tropidechis carinatus (Australian rough-scaled snake).